We begin with the raw amino-acid sequence, 141 residues long: Hemoglobin subunit alpha-A (141 aa).

The 141-residue stretch at 1 to 141 folds into the Globin domain; sequence VLSASDKSNV…VGTVLTAKYR (141 aa). H58 lines the O2 pocket. Residue H87 participates in heme b binding.

It belongs to the globin family. Heterotetramer of two alpha chains and two beta chains. In terms of tissue distribution, red blood cells.

In terms of biological role, involved in oxygen transport from the lung to the various peripheral tissues. This chain is Hemoglobin subunit alpha-A (HBAA), found in Streptopelia orientalis (Eastern turtle dove).